Consider the following 573-residue polypeptide: Glutamate--tRNA ligase (573 aa).

The 'HIGH' region signature appears at 106-116 (PNPDGAFHLGN).

The protein belongs to the class-I aminoacyl-tRNA synthetase family. Glutamate--tRNA ligase type 2 subfamily.

Its subcellular location is the cytoplasm. The enzyme catalyses tRNA(Glu) + L-glutamate + ATP = L-glutamyl-tRNA(Glu) + AMP + diphosphate. In terms of biological role, catalyzes the attachment of glutamate to tRNA(Glu) in a two-step reaction: glutamate is first activated by ATP to form Glu-AMP and then transferred to the acceptor end of tRNA(Glu). This Thermococcus onnurineus (strain NA1) protein is Glutamate--tRNA ligase.